Reading from the N-terminus, the 500-residue chain is L-arabinose isomerase (500 aa).

Positions 306, 333, 350, and 450 each coordinate Mn(2+).

This sequence belongs to the arabinose isomerase family. In terms of assembly, homohexamer. Mn(2+) serves as cofactor.

It catalyses the reaction beta-L-arabinopyranose = L-ribulose. It participates in carbohydrate degradation; L-arabinose degradation via L-ribulose; D-xylulose 5-phosphate from L-arabinose (bacterial route): step 1/3. Functionally, catalyzes the conversion of L-arabinose to L-ribulose. The chain is L-arabinose isomerase from Shigella boydii serotype 18 (strain CDC 3083-94 / BS512).